A 219-amino-acid chain; its full sequence is Translation initiation factor IF-3 (219 aa).

The protein belongs to the IF-3 family. As to quaternary structure, monomer.

The protein localises to the cytoplasm. In terms of biological role, IF-3 binds to the 30S ribosomal subunit and shifts the equilibrium between 70S ribosomes and their 50S and 30S subunits in favor of the free subunits, thus enhancing the availability of 30S subunits on which protein synthesis initiation begins. This is Translation initiation factor IF-3 from Prochlorococcus marinus (strain MIT 9313).